Consider the following 154-residue polypeptide: Small heat shock protein IbpB (154 aa).

The region spanning 26 to 137 (GQEPQGFPPY…QPQRIAIGSA (112 aa)) is the sHSP domain.

It belongs to the small heat shock protein (HSP20) family. As to quaternary structure, homodimer. Forms homomultimers of about 100-150 subunits at optimal growth temperatures. Conformation changes to oligomers at high temperatures or high ionic concentrations. The decrease in size of the multimers is accompanied by an increase in chaperone activity.

The protein resides in the cytoplasm. In terms of biological role, associates with aggregated proteins, together with IbpA, to stabilize and protect them from irreversible denaturation and extensive proteolysis during heat shock and oxidative stress. Aggregated proteins bound to the IbpAB complex are more efficiently refolded and reactivated by the ATP-dependent chaperone systems ClpB and DnaK/DnaJ/GrpE. Its activity is ATP-independent. The polypeptide is Small heat shock protein IbpB (Yersinia pseudotuberculosis serotype O:1b (strain IP 31758)).